The following is a 355-amino-acid chain: Uroporphyrinogen decarboxylase (355 aa).

Residues 27–31 (RQAGR), Asp78, Tyr155, Ser210, and His328 contribute to the substrate site.

This sequence belongs to the uroporphyrinogen decarboxylase family. Homodimer.

It localises to the cytoplasm. It catalyses the reaction uroporphyrinogen III + 4 H(+) = coproporphyrinogen III + 4 CO2. Its pathway is porphyrin-containing compound metabolism; protoporphyrin-IX biosynthesis; coproporphyrinogen-III from 5-aminolevulinate: step 4/4. Catalyzes the decarboxylation of four acetate groups of uroporphyrinogen-III to yield coproporphyrinogen-III. The chain is Uroporphyrinogen decarboxylase from Pseudomonas aeruginosa (strain UCBPP-PA14).